Consider the following 367-residue polypeptide: Probable trehalose-phosphate phosphatase 4 (367 aa).

The protein belongs to the trehalose phosphatase family. A divalent metal cation serves as cofactor.

The enzyme catalyses alpha,alpha-trehalose 6-phosphate + H2O = alpha,alpha-trehalose + phosphate. The protein operates within glycan biosynthesis; trehalose biosynthesis. Removes the phosphate from trehalose 6-phosphate to produce free trehalose. Trehalose accumulation in plant may improve abiotic stress tolerance. This Oryza sativa subsp. japonica (Rice) protein is Probable trehalose-phosphate phosphatase 4 (TPP4).